The following is a 321-amino-acid chain: Phosphoenolpyruvate transferase (321 aa).

A 7,8-didemethyl-8-hydroxy-5-deazariboflavin-binding site is contributed by Asp-51.

Belongs to the CofD family. Homodimer. Mg(2+) serves as cofactor.

It catalyses the reaction enolpyruvoyl-2-diphospho-5'-guanosine + 7,8-didemethyl-8-hydroxy-5-deazariboflavin = dehydro coenzyme F420-0 + GMP + H(+). It participates in cofactor biosynthesis; coenzyme F420 biosynthesis. Catalyzes the transfer of the phosphoenolpyruvate moiety from enoylpyruvoyl-2-diphospho-5'-guanosine (EPPG) to 7,8-didemethyl-8-hydroxy-5-deazariboflavin (FO) with the formation of dehydro coenzyme F420-0 and GMP. The sequence is that of Phosphoenolpyruvate transferase from Kitasatospora aureofaciens (Streptomyces aureofaciens).